Consider the following 428-residue polypeptide: 4-hydroxy-3-methylbut-2-en-1-yl diphosphate synthase (flavodoxin) (428 aa).

4 residues coordinate [4Fe-4S] cluster: C300, C303, C346, and E353.

Belongs to the IspG family. Requires [4Fe-4S] cluster as cofactor.

It carries out the reaction (2E)-4-hydroxy-3-methylbut-2-enyl diphosphate + oxidized [flavodoxin] + H2O + 2 H(+) = 2-C-methyl-D-erythritol 2,4-cyclic diphosphate + reduced [flavodoxin]. It functions in the pathway isoprenoid biosynthesis; isopentenyl diphosphate biosynthesis via DXP pathway; isopentenyl diphosphate from 1-deoxy-D-xylulose 5-phosphate: step 5/6. Its function is as follows. Converts 2C-methyl-D-erythritol 2,4-cyclodiphosphate (ME-2,4cPP) into 1-hydroxy-2-methyl-2-(E)-butenyl 4-diphosphate. The protein is 4-hydroxy-3-methylbut-2-en-1-yl diphosphate synthase (flavodoxin) of Methylobacillus flagellatus (strain ATCC 51484 / DSM 6875 / VKM B-1610 / KT).